A 196-amino-acid polypeptide reads, in one-letter code: N-(5'-phosphoribosyl)anthranilate isomerase (196 aa).

Belongs to the TrpF family.

It catalyses the reaction N-(5-phospho-beta-D-ribosyl)anthranilate = 1-(2-carboxyphenylamino)-1-deoxy-D-ribulose 5-phosphate. The protein operates within amino-acid biosynthesis; L-tryptophan biosynthesis; L-tryptophan from chorismate: step 3/5. This Sulfurovum sp. (strain NBC37-1) protein is N-(5'-phosphoribosyl)anthranilate isomerase.